Reading from the N-terminus, the 516-residue chain is Extracellular endo-inulinase inuA (516 aa).

Residues 1–25 form the signal peptide; sequence MLNPKVAYMVWMTCLGLMLPSQAQS. Substrate is bound by residues 40-43, Gln-59, Trp-67, and 99-100; these read WMNE and FT. Glu-43 is an active-site residue. A glycan (N-linked (GlcNAc...) asparagine) is linked at Asn-109. Position 175–176 (175–176) interacts with substrate; it reads RD. The N-linked (GlcNAc...) asparagine glycan is linked to Asn-210. Substrate is bound at residue Glu-233. N-linked (GlcNAc...) asparagine glycosylation is found at Asn-372 and Asn-419.

This sequence belongs to the glycosyl hydrolase 32 family.

It is found in the secreted. It carries out the reaction Endohydrolysis of (2-&gt;1)-beta-D-fructosidic linkages in inulin.. Activity is stimulated by Mn(2+), Fe(2+) Ca(2+) metal ions and DTT; and inhibited by glucose, Mg(2+), Zn(2+), Cu(2+), Hg(2+), Al(3+), and Fe(3+). Endo-inulinase involved in utilization of the plant storage polymer inulin, consisting of fructooligosaccharides with a degree of polymerization (DP) value from 2 to 60. This chain is Extracellular endo-inulinase inuA (inuA), found in Aspergillus niger.